Reading from the N-terminus, the 1317-residue chain is uncharacterized protein (1317 aa).

It belongs to the oxoprolinase family.

This is an uncharacterized protein from Schizosaccharomyces pombe (strain 972 / ATCC 24843) (Fission yeast).